The chain runs to 859 residues: Linoleate 9S-lipoxygenase 1 (859 aa).

The PLAT domain maps to 21 to 161 (VKGTVVLMKK…HYTTDRVFFS (141 aa)). A Lipoxygenase domain is found at 164–859 (TYLPHETPAT…GRGIPNSVSI (696 aa)). A disordered region spans residues 213–246 (KNPRPVLGGTQEYPYPRRGRTGRKPTKEDPQTES). Fe cation-binding residues include histidine 519, histidine 524, histidine 711, asparagine 715, and isoleucine 859.

It belongs to the lipoxygenase family. Monomer. It depends on Fe cation as a cofactor. Seedlings, roots, leaves, and flowers (at protein level). Expressed in guard cells.

It localises to the cytoplasm. The catalysed reaction is (9Z,12Z)-octadecadienoate + O2 = (9S)-hydroperoxy-(10E,12Z)-octadecadienoate. It carries out the reaction (9Z,12Z,15Z)-octadecatrienoate + O2 = (9S)-hydroperoxy-(10E,12Z,15Z)-octadecatrienoate. It functions in the pathway lipid metabolism; oxylipin biosynthesis. Functionally, 9S-lipoxygenase that can use linoleic acid or linolenic acid as substrates. Plant lipoxygenases may be involved in a number of diverse aspects of plant physiology including growth and development, pest resistance, and senescence or responses to wounding. Catalyzes the hydroperoxidation of lipids containing a cis,cis-1,4-pentadiene structure. Function as regulators of root development by controlling the emergence of lateral roots. 9S-lypoxygenase-derived oxylipins may play an antagonistic role to ethylene signaling in the control of responses involving oxidative stress, lipid peroxidation and plant defense. LOX1-derived oxylipins may be involved in stress signaling from roots to shoots in response to cadmium exposure. 9S-lypoxygenase-derived oxylipins are engaged during infection to control the balance between salicylic acid (SA) and jasmonate (JA) signaling to facilitate infection by the fungal pathogen Fusarium graminearum. 9S-lypoxygenase-derived oxylipins activate brassinosteroid signaling to promote cell wall-based defense and limit pathogen infection. The LOX1-derived compound (9S)-hydroperoxy-(10E,12Z,15Z)-octadecatrienoate protects plant tissues against infection by the bacterial pathogen Pseudomonas syringae pv tomato DC3000. The LOX1-derived oxylipins are required to trigger stomatal closure in response to both infection by the bacterial pathogen Pseudomonas syringae pv tomato DC3000, and the pathogen-associated molecular pattern (PAMP) flagellin peptide flg22. Contributes to the oxidation of free fatty acids during seed aging. The polypeptide is Linoleate 9S-lipoxygenase 1 (Arabidopsis thaliana (Mouse-ear cress)).